A 640-amino-acid chain; its full sequence is Chaperone protein DnaK (640 aa).

At Thr199 the chain carries Phosphothreonine; by autocatalysis. The disordered stretch occupies residues 603 to 640 (YTQQAEEPQPQKEEGKAAEEDVVDAEFEEVKEDKNKAS). Over residues 611-621 (QPQKEEGKAAE) the composition is skewed to basic and acidic residues. Residues 622–632 (EDVVDAEFEEV) are compositionally biased toward acidic residues.

It belongs to the heat shock protein 70 family.

Acts as a chaperone. The chain is Chaperone protein DnaK from Nitrosococcus oceani (strain ATCC 19707 / BCRC 17464 / JCM 30415 / NCIMB 11848 / C-107).